A 360-amino-acid polypeptide reads, in one-letter code: Phospho-N-acetylmuramoyl-pentapeptide-transferase (360 aa).

10 helical membrane passes run 21-41 (YITF…LWIG), 73-93 (TMGG…WADL), 98-118 (IWFV…DDYW), 132-152 (WKYF…YAVG), 168-188 (VMPQ…VGTS), 199-219 (GLAI…AWAT), 236-256 (AGEL…FLWY), 263-283 (VFMG…IAVL), 288-308 (LLLV…ILQV), and 338-358 (VIVR…VTLK).

Belongs to the glycosyltransferase 4 family. MraY subfamily. Mg(2+) is required as a cofactor.

It localises to the cell inner membrane. The enzyme catalyses UDP-N-acetyl-alpha-D-muramoyl-L-alanyl-gamma-D-glutamyl-meso-2,6-diaminopimeloyl-D-alanyl-D-alanine + di-trans,octa-cis-undecaprenyl phosphate = di-trans,octa-cis-undecaprenyl diphospho-N-acetyl-alpha-D-muramoyl-L-alanyl-D-glutamyl-meso-2,6-diaminopimeloyl-D-alanyl-D-alanine + UMP. It functions in the pathway cell wall biogenesis; peptidoglycan biosynthesis. Catalyzes the initial step of the lipid cycle reactions in the biosynthesis of the cell wall peptidoglycan: transfers peptidoglycan precursor phospho-MurNAc-pentapeptide from UDP-MurNAc-pentapeptide onto the lipid carrier undecaprenyl phosphate, yielding undecaprenyl-pyrophosphoryl-MurNAc-pentapeptide, known as lipid I. This chain is Phospho-N-acetylmuramoyl-pentapeptide-transferase, found in Actinobacillus pleuropneumoniae serotype 5b (strain L20).